Here is a 355-residue protein sequence, read N- to C-terminus: Receptor-like serine/threonine-protein kinase At1g78530 (355 aa).

The Extracellular segment spans residues 1-8; sequence MANAKETT. Residues 9-29 form a helical membrane-spanning segment; sequence FYITISVVAFVIGKIVIALLF. Residues 30-355 are Cytoplasmic-facing; the sequence is YKRWKRKHTI…YIKLSTRSSF (326 aa). In terms of domain architecture, Protein kinase spans 75–347; the sequence is LSNKDILGSG…TEVVKLLEYI (273 aa). ATP contacts are provided by residues 81-89 and K103; that span reads LGSGGFGTV. Residue Y148 is modified to Phosphotyrosine. D197 serves as the catalytic Proton acceptor. A phosphoserine mark is found at S201 and S230. Residues T231 and T236 each carry the phosphothreonine modification. At Y244 the chain carries Phosphotyrosine.

Belongs to the protein kinase superfamily. Ser/Thr protein kinase family.

Its subcellular location is the cell membrane. The catalysed reaction is L-seryl-[protein] + ATP = O-phospho-L-seryl-[protein] + ADP + H(+). The enzyme catalyses L-threonyl-[protein] + ATP = O-phospho-L-threonyl-[protein] + ADP + H(+). In Arabidopsis thaliana (Mouse-ear cress), this protein is Receptor-like serine/threonine-protein kinase At1g78530.